The primary structure comprises 221 residues: Deoxyribose-phosphate aldolase (221 aa).

The Proton donor/acceptor role is filled by D90. K152 functions as the Schiff-base intermediate with acetaldehyde in the catalytic mechanism. K181 functions as the Proton donor/acceptor in the catalytic mechanism.

It belongs to the DeoC/FbaB aldolase family. DeoC type 1 subfamily.

It is found in the cytoplasm. It carries out the reaction 2-deoxy-D-ribose 5-phosphate = D-glyceraldehyde 3-phosphate + acetaldehyde. It functions in the pathway carbohydrate degradation; 2-deoxy-D-ribose 1-phosphate degradation; D-glyceraldehyde 3-phosphate and acetaldehyde from 2-deoxy-alpha-D-ribose 1-phosphate: step 2/2. Catalyzes a reversible aldol reaction between acetaldehyde and D-glyceraldehyde 3-phosphate to generate 2-deoxy-D-ribose 5-phosphate. The sequence is that of Deoxyribose-phosphate aldolase from Syntrophotalea carbinolica (strain DSM 2380 / NBRC 103641 / GraBd1) (Pelobacter carbinolicus).